Here is a 746-residue protein sequence, read N- to C-terminus: NAD(P)H-quinone oxidoreductase subunit 5, chloroplastic (746 aa).

16 helical membrane-spanning segments follow: residues 9–29, 39–59, 89–109, 125–145, 147–167, 185–205, 221–241, 258–278, 280–300, 327–347, 354–374, 396–416, 425–445, 547–567, 608–628, and 723–743; these read WIIPFIPLPVPILLGVGLLLF, IWTFLSIFLLSIVMIFSLYLS, IDPLTSIMSILITTVGILVLI, FAYMGFFNTSMLGLVTSSNLI, VYFFWELVGMCSYLLIGFWFT, GDFGLLLGILGLYWITGSFEF, VNFFFFTLCGFLLFVGPIAKS, TPISALIHAATMVAAGIFLVA, LLPLFIVIPSIMYIISLIGII, LGYMMLALGMGSYRSALFHLI, ALLFLGSGSIIHSMEAIVGYS, TAFLIGTLSLCGIPPLACFWS, LLFSPIFAIIACSTAGLTAFY, ILFPILILLLFTLFIGAIGIP, FSVSIAFFGIFIAYCLYKPFY, and YLFFYLSYVLIFLLILFFFYF.

Belongs to the complex I subunit 5 family. In terms of assembly, NDH is composed of at least 16 different subunits, 5 of which are encoded in the nucleus.

The protein localises to the plastid. It localises to the chloroplast thylakoid membrane. The enzyme catalyses a plastoquinone + NADH + (n+1) H(+)(in) = a plastoquinol + NAD(+) + n H(+)(out). It catalyses the reaction a plastoquinone + NADPH + (n+1) H(+)(in) = a plastoquinol + NADP(+) + n H(+)(out). NDH shuttles electrons from NAD(P)H:plastoquinone, via FMN and iron-sulfur (Fe-S) centers, to quinones in the photosynthetic chain and possibly in a chloroplast respiratory chain. The immediate electron acceptor for the enzyme in this species is believed to be plastoquinone. Couples the redox reaction to proton translocation, and thus conserves the redox energy in a proton gradient. This chain is NAD(P)H-quinone oxidoreductase subunit 5, chloroplastic (ndhF), found in Capsella bursa-pastoris (Shepherd's purse).